We begin with the raw amino-acid sequence, 507 residues long: ATP synthase subunit alpha, chloroplastic (507 aa).

An ATP-binding site is contributed by 170–177; sequence GDRQTGKT.

It belongs to the ATPase alpha/beta chains family. In terms of assembly, F-type ATPases have 2 components, CF(1) - the catalytic core - and CF(0) - the membrane proton channel. CF(1) has five subunits: alpha(3), beta(3), gamma(1), delta(1), epsilon(1). CF(0) has four main subunits: a, b, b' and c.

Its subcellular location is the plastid. It is found in the chloroplast thylakoid membrane. It carries out the reaction ATP + H2O + 4 H(+)(in) = ADP + phosphate + 5 H(+)(out). Functionally, produces ATP from ADP in the presence of a proton gradient across the membrane. The alpha chain is a regulatory subunit. In Silene latifolia (White campion), this protein is ATP synthase subunit alpha, chloroplastic.